The chain runs to 309 residues: Probable manganese-dependent inorganic pyrophosphatase (309 aa).

Mn(2+) contacts are provided by His-9, Asp-13, Asp-15, Asp-75, His-97, and Asp-149.

This sequence belongs to the PPase class C family. The cofactor is Mn(2+).

The protein resides in the cytoplasm. It carries out the reaction diphosphate + H2O = 2 phosphate + H(+). The sequence is that of Probable manganese-dependent inorganic pyrophosphatase from Bacillus cereus (strain B4264).